We begin with the raw amino-acid sequence, 279 residues long: Ribonuclease Z (279 aa).

Zn(2+) is bound by residues histidine 61, histidine 63, aspartate 65, histidine 66, histidine 153, aspartate 176, and histidine 240. Aspartate 65 serves as the catalytic Proton acceptor.

This sequence belongs to the RNase Z family. As to quaternary structure, homodimer. It depends on Zn(2+) as a cofactor.

It catalyses the reaction Endonucleolytic cleavage of RNA, removing extra 3' nucleotides from tRNA precursor, generating 3' termini of tRNAs. A 3'-hydroxy group is left at the tRNA terminus and a 5'-phosphoryl group is left at the trailer molecule.. Functionally, zinc phosphodiesterase, which displays some tRNA 3'-processing endonuclease activity. Probably involved in tRNA maturation, by removing a 3'-trailer from precursor tRNA. The chain is Ribonuclease Z from Mycobacterium marinum (strain ATCC BAA-535 / M).